The following is a 507-amino-acid chain: Cysteine--tRNA ligase (507 aa).

C29 contacts Zn(2+). The 'HIGH' region motif lies at 31–41 (PTVYDVPHIGN). Zn(2+) is bound by residues C207, H232, and E236. Residues 265–269 (KMSKS) carry the 'KMSKS' region motif. K268 contributes to the ATP binding site.

The protein belongs to the class-I aminoacyl-tRNA synthetase family. As to quaternary structure, monomer. Zn(2+) serves as cofactor.

Its subcellular location is the cytoplasm. It catalyses the reaction tRNA(Cys) + L-cysteine + ATP = L-cysteinyl-tRNA(Cys) + AMP + diphosphate. In Neorickettsia sennetsu (strain ATCC VR-367 / Miyayama) (Ehrlichia sennetsu), this protein is Cysteine--tRNA ligase.